The chain runs to 262 residues: MAVISMKQLLEAGVHFGHQTRRWNPKMKKYIFTERNGIYIIDLQKTVKKVEEAYNFVKQISEEGGKVLFVGTKKQAQESVKAEAERAGQFYVNQRWLGGILTNYKTISKRIKRISEIEKMEEDGLFEVLPKKEVVELKKEYDRLIKFLGGIRDMKSMPQALFVVDPRKERNAIAEARKLNIPIVGIVDTNCDPDEIDYVIPANDDAIRAVKLLTGKMADAILEGQQGVSNEEVAAEQNINLDDKEESEQAETTEENTSVESN.

The interval 228 to 262 (VSNEEVAAEQNINLDDKEESEQAETTEENTSVESN) is disordered. The segment covering 243 to 254 (DKEESEQAETTE) has biased composition (acidic residues).

Belongs to the universal ribosomal protein uS2 family.

In Staphylococcus epidermidis (strain ATCC 35984 / DSM 28319 / BCRC 17069 / CCUG 31568 / BM 3577 / RP62A), this protein is Small ribosomal subunit protein uS2.